Consider the following 273-residue polypeptide: Serine acetyltransferase (273 aa).

The protein belongs to the transferase hexapeptide repeat family. As to quaternary structure, part of the cysteine synthase complex formed at a ratio of 1 copy of this protein and 2 copies of O-acetylserine sulfhydrylase (cysK). The complex reversibly dissociates in the presence of O-acetyl-L-serine in the absence of hydrogen sulfide.

The protein localises to the cytoplasm. It carries out the reaction L-serine + acetyl-CoA = O-acetyl-L-serine + CoA. It participates in amino-acid biosynthesis; L-cysteine biosynthesis; L-cysteine from L-serine: step 1/2. Its activity is regulated as follows. Sensitive to feedback inhibition by L-cysteine. This Salmonella typhimurium (strain LT2 / SGSC1412 / ATCC 700720) protein is Serine acetyltransferase (cysE).